A 152-amino-acid polypeptide reads, in one-letter code: SsrA-binding protein (152 aa).

Belongs to the SmpB family.

The protein resides in the cytoplasm. Required for rescue of stalled ribosomes mediated by trans-translation. Binds to transfer-messenger RNA (tmRNA), required for stable association of tmRNA with ribosomes. tmRNA and SmpB together mimic tRNA shape, replacing the anticodon stem-loop with SmpB. tmRNA is encoded by the ssrA gene; the 2 termini fold to resemble tRNA(Ala) and it encodes a 'tag peptide', a short internal open reading frame. During trans-translation Ala-aminoacylated tmRNA acts like a tRNA, entering the A-site of stalled ribosomes, displacing the stalled mRNA. The ribosome then switches to translate the ORF on the tmRNA; the nascent peptide is terminated with the 'tag peptide' encoded by the tmRNA and targeted for degradation. The ribosome is freed to recommence translation, which seems to be the essential function of trans-translation. This chain is SsrA-binding protein, found in Helicobacter pylori (strain J99 / ATCC 700824) (Campylobacter pylori J99).